The primary structure comprises 90 residues: UPF0237 protein MJ1558 (90 aa).

Residues 5 to 79 (VVSVIGQDRT…EELGVQVIVQ (75 aa)) form the ACT domain.

The protein belongs to the UPF0237 family.

This is UPF0237 protein MJ1558 from Methanocaldococcus jannaschii (strain ATCC 43067 / DSM 2661 / JAL-1 / JCM 10045 / NBRC 100440) (Methanococcus jannaschii).